Reading from the N-terminus, the 309-residue chain is Formate-nitrite transporter (309 aa).

The Cytoplasmic segment spans residues 1 to 19; sequence MPPNNSKYVLDPVSIKSVC. The segment at residues 20–35 is an intramembrane region (helical); the sequence is GGEESYIRCVEYGKKK. Over 36 to 40 the chain is Cytoplasmic; it reads AHYSN. The helical transmembrane segment at 41–68 threads the bilayer; it reads LNLLAKAILAGMFVGLCAHASGIAGGLF. The Extracellular segment spans residues 69-79; it reads YYHKLREIVGA. A helical transmembrane segment spans residues 80–100; that stretch reads SMSVFVYGFTFPIAFMCIICT. Over 101-122 the chain is Cytoplasmic; the sequence is GSDLFTGNTLAVTMALYEKKVK. A helical membrane pass occupies residues 123–150; it reads LLDYLRVMTISLFGNYVGAVSFAFFVSY. At 151–163 the chain is on the extracellular side; that stretch reads LSGAFTNVHAVEK. Positions 164–179 form an intramembrane region, helical; it reads NHFFQFLNDIAEKKVH. The Extracellular portion of the chain corresponds to 180-181; it reads HT. A helical transmembrane segment spans residues 182–206; the sequence is FVECVSLAVGCNIFVCLAVYFVLTL. Residues 207–209 are Cytoplasmic-facing; that stretch reads KDG. Residues 210–226 traverse the membrane as a helical segment; it reads AGYVFSVFFAVYAFAIA. Residues 227 to 249 are Extracellular-facing; the sequence is GYEHIIANIYTLNIALMVNTKIT. A helical membrane pass occupies residues 250-280; that stretch reads VYQAYIKNLLPTLLGNYIAGAIVLGLPLYFI. Over 281-309 the chain is Cytoplasmic; the sequence is YKEHYYNFERSKRDNNDAQMKSLSIELRN.

Belongs to the FNT transporter (TC 1.A.16) family. As to quaternary structure, homopentamer.

Its subcellular location is the cell membrane. It localises to the vacuole membrane. The catalysed reaction is (S)-lactate(in) + H(+)(in) = (S)-lactate(out) + H(+)(out). The enzyme catalyses formate(in) + H(+)(in) = formate(out) + H(+)(out). It carries out the reaction pyruvate(out) + H(+)(out) = pyruvate(in) + H(+)(in). It catalyses the reaction acetate(out) + H(+)(out) = acetate(in) + H(+)(in). With respect to regulation, inhibited by diethylpyrocarbonate (DEPC). Protonophores, such as 2,4-dinitrophenol and carbonylcyanide-3-chlorophenylhydrazone, abolish transport. Inhibited by phloretin, furosemide, alpha-cyano-4-hydroxy-cinnamate and alpha-fluorocinnamate. Inhibited by the Malaria Box compound MMV007839 and its derivatives BH296 and BH267.meta. Inhibited by the Malaria Box compound MMV000972. Inhibited by broad-specificity anion transport inhibitor NPPB. In terms of biological role, monocarboxylate-proton symporter that mediates the efflux of the waste product lactate in the intraerythrocytic parasites; active in acidic-to-neutral pH range. Transports L-lactate. Transports D-lactate, pyruvate, acetate and formate. Essential for asexual growth but dispensable for the development of gametocytes. The sequence is that of Formate-nitrite transporter from Plasmodium falciparum (isolate 3D7).